The primary structure comprises 364 residues: Dual-specificity RNA methyltransferase RlmN (364 aa).

Catalysis depends on glutamate 91, which acts as the Proton acceptor. One can recognise a Radical SAM core domain in the interval 97–333; sequence EDDRGTLCVS…VTVRKTRGDD (237 aa). The cysteines at positions 104 and 338 are disulfide-linked. Cysteine 111, cysteine 115, and cysteine 118 together coordinate [4Fe-4S] cluster. S-adenosyl-L-methionine is bound by residues 164-165, serine 196, 218-220, and asparagine 295; these read GE and SLH. Cysteine 338 serves as the catalytic S-methylcysteine intermediate.

Belongs to the radical SAM superfamily. RlmN family. [4Fe-4S] cluster is required as a cofactor.

The protein resides in the cytoplasm. It catalyses the reaction adenosine(2503) in 23S rRNA + 2 reduced [2Fe-2S]-[ferredoxin] + 2 S-adenosyl-L-methionine = 2-methyladenosine(2503) in 23S rRNA + 5'-deoxyadenosine + L-methionine + 2 oxidized [2Fe-2S]-[ferredoxin] + S-adenosyl-L-homocysteine. It carries out the reaction adenosine(37) in tRNA + 2 reduced [2Fe-2S]-[ferredoxin] + 2 S-adenosyl-L-methionine = 2-methyladenosine(37) in tRNA + 5'-deoxyadenosine + L-methionine + 2 oxidized [2Fe-2S]-[ferredoxin] + S-adenosyl-L-homocysteine. Its function is as follows. Specifically methylates position 2 of adenine 2503 in 23S rRNA and position 2 of adenine 37 in tRNAs. m2A2503 modification seems to play a crucial role in the proofreading step occurring at the peptidyl transferase center and thus would serve to optimize ribosomal fidelity. This is Dual-specificity RNA methyltransferase RlmN from Chromobacterium violaceum (strain ATCC 12472 / DSM 30191 / JCM 1249 / CCUG 213 / NBRC 12614 / NCIMB 9131 / NCTC 9757 / MK).